Here is a 372-residue protein sequence, read N- to C-terminus: tRNA-specific 2-thiouridylase MnmA (372 aa).

ATP-binding positions include 16–23 (GMSGGVDS) and M42. The tract at residues 102 to 104 (NPD) is interaction with target base in tRNA. C107 acts as the Nucleophile in catalysis. Residues C107 and C205 are joined by a disulfide bond. Position 132 (G132) interacts with ATP. The interaction with tRNA stretch occupies residues 155 to 157 (KDQ). Residue C205 is the Cysteine persulfide intermediate of the active site. Residues 317-318 (RY) form an interaction with tRNA region.

This sequence belongs to the MnmA/TRMU family.

The protein localises to the cytoplasm. The enzyme catalyses S-sulfanyl-L-cysteinyl-[protein] + uridine(34) in tRNA + AH2 + ATP = 2-thiouridine(34) in tRNA + L-cysteinyl-[protein] + A + AMP + diphosphate + H(+). In terms of biological role, catalyzes the 2-thiolation of uridine at the wobble position (U34) of tRNA, leading to the formation of s(2)U34. The polypeptide is tRNA-specific 2-thiouridylase MnmA (Shewanella baltica (strain OS185)).